The sequence spans 345 residues: Nuclear distribution protein nudE-like 1 (345 aa).

Residues 28–190 adopt a coiled-coil conformation; the sequence is QSFQEARDEL…LAVRERQQEV (163 aa). Residues 56 to 166 form a self-association region; the sequence is VQAEQRNRDL…LDEKESLLVS (111 aa). The segment at 64–189 is interaction with KATNB1; that stretch reads DLQADNQRLK…ELAVRERQQE (126 aa). A required for interaction with PAFAH1B1 region spans residues 114-133; sequence YVRELEQANDDLERAKRATI. The segment at 175–345 is interaction with CENPF; that stretch reads RDLRQELAVR…SAPGMLPLSV (171 aa). An interaction with YWHAE region spans residues 189–256; that stretch reads EVTRKSAPSS…SARISALNIV (68 aa). The interval 191-345 is interaction with NEFL; sequence TRKSAPSSPT…SAPGMLPLSV (155 aa). The tract at residues 195–256 is interaction with KATNA1; the sequence is APSSPTLDCE…SARISALNIV (62 aa). Ser215 carries the post-translational modification Phosphoserine. Residue Thr219 is modified to Phosphothreonine; by CDK1 and MAPK1. A Phosphoserine modification is found at Ser231. An interaction with DISC1 region spans residues 241–280; that stretch reads TSPLTPSARISALNIVGDLLRKVGALESKLAACRNFAKDQ. Ser242 is modified (phosphoserine; by CDK1). Position 245 is a phosphothreonine; by CDK1 and MAPK1 (Thr245). The tract at residues 256–291 is required for localization to the centrosome and interaction with dynein, dynactin, tubulin gamma, PCM1 and PCNT; sequence VGDLLRKVGALESKLAACRNFAKDQASRKSYISGNV. Cys273 carries the S-palmitoyl cysteine; by ZDHHC2, ZDHHC3 and ZDHHC7 lipid modification. The disordered stretch occupies residues 315–345; that stretch reads GAVNGFDPAPPPPGLGSSRPSSAPGMLPLSV. A compositionally biased stretch (low complexity) spans 329-339; sequence LGSSRPSSAPG. Ser344 bears the Phosphoserine mark.

Belongs to the nudE family. In terms of assembly, interacts with PLEKHM1 (via N- and C-terminus). Interacts with YWHAE. Interacts directly with NEFL and indirectly with NEFH. Interacts with microtubules. Self-associates. Interacts with DISC1, dynein, dynactin, tubulin gamma, KATNA1, KATNB1, PAFAH1B1, PCM1 and PCNT. Interacts (via C-terminus) with CENPF. Interacts with ZNF365. Interacts with GTP-bound RAB9A; the interaction may lead to RAB9A-dynein motor tethering. In terms of processing, phosphorylated in mitosis. Can be phosphorylated by CDK1, CDK5 and MAPK1. Phosphorylation by CDK5 promotes interaction with KATNA1 and YWHAE. Palmitoylation at Cys-273 reduces affinity for dynein. In terms of tissue distribution, expressed in brain, heart, kidney, liver, lung, pancreas, placenta and skeletal muscle.

The protein resides in the cytoplasm. The protein localises to the cytoskeleton. It localises to the microtubule organizing center. It is found in the centrosome. Its subcellular location is the chromosome. The protein resides in the centromere. The protein localises to the kinetochore. It localises to the spindle. Required for organization of the cellular microtubule array and microtubule anchoring at the centrosome. May regulate microtubule organization at least in part by targeting the microtubule severing protein KATNA1 to the centrosome. Also positively regulates the activity of the minus-end directed microtubule motor protein dynein. May enhance dynein-mediated microtubule sliding by targeting dynein to the microtubule plus ends. Required for several dynein- and microtubule-dependent processes such as the maintenance of Golgi integrity, the centripetal motion of secretory vesicles and the coupling of the nucleus and centrosome. Also required during brain development for the migration of newly formed neurons from the ventricular/subventricular zone toward the cortical plate. Plays a role, together with DISC1, in the regulation of neurite outgrowth. Required for mitosis in some cell types but appears to be dispensible for mitosis in cortical neuronal progenitors, which instead requires NDE1. Facilitates the polymerization of neurofilaments from the individual subunits NEFH and NEFL. Positively regulates lysosome peripheral distribution and ruffled border formation in osteoclasts. Plays a role, together with DISC1, in the regulation of neurite outgrowth. May act as a RAB9A/B effector that tethers RAB9-associated late endosomes to the dynein motor for their retrograde transport to the trans-Golgi network. This chain is Nuclear distribution protein nudE-like 1 (NDEL1), found in Homo sapiens (Human).